A 102-amino-acid polypeptide reads, in one-letter code: Small ribosomal subunit protein uS10 (102 aa).

The protein belongs to the universal ribosomal protein uS10 family. As to quaternary structure, part of the 30S ribosomal subunit.

Its function is as follows. Involved in the binding of tRNA to the ribosomes. This is Small ribosomal subunit protein uS10 from Chlorobium phaeobacteroides (strain BS1).